A 212-amino-acid chain; its full sequence is Methylthioribulose-1-phosphate dehydratase (212 aa).

Residues histidine 97 and histidine 99 each contribute to the Zn(2+) site.

It belongs to the aldolase class II family. MtnB subfamily. As to quaternary structure, homotetramer. Zn(2+) is required as a cofactor.

It carries out the reaction 5-(methylsulfanyl)-D-ribulose 1-phosphate = 5-methylsulfanyl-2,3-dioxopentyl phosphate + H2O. It participates in amino-acid biosynthesis; L-methionine biosynthesis via salvage pathway; L-methionine from S-methyl-5-thio-alpha-D-ribose 1-phosphate: step 2/6. Its function is as follows. Catalyzes the dehydration of methylthioribulose-1-phosphate (MTRu-1-P) into 2,3-diketo-5-methylthiopentyl-1-phosphate (DK-MTP-1-P). The chain is Methylthioribulose-1-phosphate dehydratase from Bacillus cereus (strain B4264).